The primary structure comprises 242 residues: GLIPR1-like protein 1 (242 aa).

A signal peptide spans 1-22 (MALKNKFSCLWILGLCLVATTS). The SCP domain occupies 39-171 (EAHNEWRGKV…ASTAIFVCNY (133 aa)). Asn119 carries N-linked (GlcNAc...) asparagine glycosylation. The GPI-anchor amidated glycine moiety is linked to residue Gly221. The propeptide at 222 to 242 (RAPQQTAFNPFSLGFLLLRIF) is removed in mature form.

Belongs to the CRISP family. As to quaternary structure, part of a oolemmal binding multimeric complex (IZUMO1 complex) composed at least of IZUMO1 and GLIPR1L1; the complex assemblage is influenced by the maturation status of the male germ cell. Interacts with IZUMO1. In terms of processing, N-glycosylated. N-glycosylation decreases during the transit in the caput. In terms of tissue distribution, highly expressed in testis.

It localises to the cytoplasmic vesicle. The protein resides in the secretory vesicle. It is found in the acrosome. The protein localises to the cell membrane. Its subcellular location is the membrane raft. It localises to the secreted. Required for optimal fertilization at the stage of sperm-oocyte fusion, plays a role in optimizing acrosome function, the translocation of IZUMO1 during the acrosome reaction and the fertilization process. Component of epididymosomes, one type of membranous microvesicules which mediate the transfer of lipids and proteins to spermatozoa plasma membrane during epididymal maturation. Also component of the CD9-positive microvesicules found in the cauda region. The sequence is that of GLIPR1-like protein 1 (GLIPR1L1) from Homo sapiens (Human).